A 148-amino-acid chain; its full sequence is UPF0756 membrane protein CKO_01811 (148 aa).

Helical transmembrane passes span 14-34 (ALGFISHNTTVAVSILVLIIV), 51-71 (LTVGIIILTIGVMAPIASGSL), 86-106 (LVAIAIGVFVSWLGGRGVTLM), and 121-141 (VLGVALFRGVPVGPLIAAGLV).

Belongs to the UPF0756 family.

Its subcellular location is the cell membrane. The protein is UPF0756 membrane protein CKO_01811 of Citrobacter koseri (strain ATCC BAA-895 / CDC 4225-83 / SGSC4696).